The chain runs to 437 residues: Transmembrane protease serine 4 (437 aa).

At 1-32 (MLQDPDSDQPLNSLDVKPLRKPRIPMETFRKV) the chain is on the cytoplasmic side. The helical; Signal-anchor for type II membrane protein transmembrane segment at 33 to 53 (GIPIIIALLSLASIIIVVVLI) threads the bilayer. The Extracellular portion of the chain corresponds to 54–437 (KVILDKYYFL…WIYNVWKAEL (384 aa)). The LDL-receptor class A domain occupies 61–93 (YFLCGQPLHFIPRKQLCDGELDCPLGEDEEHCV). 8 cysteine pairs are disulfide-bonded: cysteine 64-cysteine 83, cysteine 77-cysteine 92, cysteine 127-cysteine 183, cysteine 140-cysteine 193, cysteine 196-cysteine 310, cysteine 230-cysteine 246, cysteine 356-cysteine 372, and cysteine 383-cysteine 410. The 111-residue stretch at 94–204 (KSFPEGPAVA…ACGKSLKTPR (111 aa)) folds into the SRCR domain. Residues asparagine 130 and asparagine 178 are each glycosylated (N-linked (GlcNAc...) asparagine). A Peptidase S1 domain is found at 205–434 (VVGVEEASVD…YLNWIYNVWK (230 aa)). Catalysis depends on charge relay system residues histidine 245 and aspartate 290. The Charge relay system role is filled by serine 387.

This sequence belongs to the peptidase S1 family. In terms of processing, proteolytically processed; probably by an autocatalytic mechanism. High levels in pancreatic, gastric, colorectal and ampullary cancer. Very weak expression in normal gastrointestinal and urogenital tract. Coexpressed with ACE2 within mature enterocytes.

It localises to the cell membrane. Its subcellular location is the secreted. Functionally, plasma membrane-anchored serine protease that directly induces processing of pro-uPA/PLAU into the active form through proteolytic activity. Seems to be capable of activating ENaC. (Microbial infection) In gut epithelial cells, facilitates human coronavirus SARS-CoV-2 infection through, at least, the cleavage of coronavirus spike glycoproteins which activates the glycoprotein for host cell entry. This is Transmembrane protease serine 4 from Homo sapiens (Human).